A 77-amino-acid polypeptide reads, in one-letter code: UPF0401 protein c3666 (77 aa).

Belongs to the UPF0401 family.

The protein is UPF0401 protein c3666 of Escherichia coli O6:H1 (strain CFT073 / ATCC 700928 / UPEC).